The primary structure comprises 334 residues: Probable tRNA pseudouridine synthase B (334 aa).

Aspartate 82 serves as the catalytic Nucleophile. In terms of domain architecture, PUA spans 250–325 (LPKVWIRDSA…IAVDVDKVFM (76 aa)).

The protein belongs to the pseudouridine synthase TruB family. Type 2 subfamily.

It catalyses the reaction uridine(55) in tRNA = pseudouridine(55) in tRNA. Functionally, could be responsible for synthesis of pseudouridine from uracil-55 in the psi GC loop of transfer RNAs. In Thermococcus gammatolerans (strain DSM 15229 / JCM 11827 / EJ3), this protein is Probable tRNA pseudouridine synthase B.